A 197-amino-acid chain; its full sequence is Beta-crystallin A2 (197 aa).

Residues 1 to 11 form an N-terminal arm region; that stretch reads MSSAPAPGPAP. 2 consecutive Beta/gamma crystallin 'Greek key' domains span residues 12-52 and 53-99; these read ASLT…KVEN and GVWV…RPVL. Positions 100 to 105 are connecting peptide; that stretch reads CANHND. 2 Beta/gamma crystallin 'Greek key' domains span residues 106 to 147 and 148 to 196; these read SRVT…KVSS and GAWV…RRVQ.

This sequence belongs to the beta/gamma-crystallin family. In terms of assembly, homo/heterodimer, or complexes of higher-order. The structure of beta-crystallin oligomers seems to be stabilized through interactions between the N-terminal arms.

Functionally, crystallins are the dominant structural components of the vertebrate eye lens. The sequence is that of Beta-crystallin A2 (CRYBA2) from Homo sapiens (Human).